The sequence spans 132 residues: Small ribosomal subunit protein uS11 (132 aa).

This sequence belongs to the universal ribosomal protein uS11 family. Part of the 30S ribosomal subunit. Interacts with proteins S7 and S18. Binds to IF-3.

Its function is as follows. Located on the platform of the 30S subunit, it bridges several disparate RNA helices of the 16S rRNA. Forms part of the Shine-Dalgarno cleft in the 70S ribosome. In Chlamydia trachomatis serovar D (strain ATCC VR-885 / DSM 19411 / UW-3/Cx), this protein is Small ribosomal subunit protein uS11.